The chain runs to 569 residues: Proline--tRNA ligase (569 aa).

This sequence belongs to the class-II aminoacyl-tRNA synthetase family. ProS type 1 subfamily. Homodimer.

Its subcellular location is the cytoplasm. It catalyses the reaction tRNA(Pro) + L-proline + ATP = L-prolyl-tRNA(Pro) + AMP + diphosphate. Functionally, catalyzes the attachment of proline to tRNA(Pro) in a two-step reaction: proline is first activated by ATP to form Pro-AMP and then transferred to the acceptor end of tRNA(Pro). As ProRS can inadvertently accommodate and process non-cognate amino acids such as alanine and cysteine, to avoid such errors it has two additional distinct editing activities against alanine. One activity is designated as 'pretransfer' editing and involves the tRNA(Pro)-independent hydrolysis of activated Ala-AMP. The other activity is designated 'posttransfer' editing and involves deacylation of mischarged Ala-tRNA(Pro). The misacylated Cys-tRNA(Pro) is not edited by ProRS. The protein is Proline--tRNA ligase of Legionella pneumophila (strain Lens).